The sequence spans 2171 residues: Voltage-dependent L-type calcium channel subunit alpha-1C (2171 aa).

The Cytoplasmic portion of the chain corresponds to 1–154; that stretch reads MLRALVQPAT…RACISIVEWK (154 aa). Positions 77–98 are calmodulin-binding; that stretch reads GAALSWQAAIDAARQAKLMGSA. Residues 103-128 are disordered; the sequence is ISTVSSTQRKRQQYGKPKKQGSTTAT. Positions 110–121 are enriched in basic residues; it reads QRKRQQYGKPKK. One copy of the I repeat lies at 141–438; that stretch reads NPIRRACISI…LVLGVLSGEF (298 aa). Residues 155-173 form a helical membrane-spanning segment; that stretch reads PFEIIILLTIFANCVALAI. At 174–188 the chain is on the extracellular side; that stretch reads YIPFPEDDSNATNSN. Asn-183 carries an N-linked (GlcNAc...) asparagine glycan. Residues 189–209 traverse the membrane as a helical segment; it reads LERVEYLFLIIFTVEAFLKVI. Topologically, residues 210-218 are cytoplasmic; that stretch reads AYGLLFHPN. Residues 219-239 form a helical membrane-spanning segment; it reads AYLRNGWNLLDFIIVVVGLFS. At 240–262 the chain is on the extracellular side; it reads AILEQATKADGANALGGKGAGFD. The chain crosses the membrane as a helical span at residues 263-281; it reads VKALRAFRVLRPLRLVSGV. The Cytoplasmic portion of the chain corresponds to 282–298; the sequence is PSLQVVLNSIIKAMVPL. Residues 299–320 traverse the membrane as a helical segment; it reads LHIALLVLFVIIIYAIIGLELF. Residues 321–380 lie on the Extracellular side of the membrane; the sequence is MGKMHKTCYNQEGVADVPAEDDPSPCALETGHGRQCQNGTVCKPGWDGPKHGITNFDNFA. 2 cysteine pairs are disulfide-bonded: Cys-328-Cys-356 and Cys-346-Cys-362. An N-linked (GlcNAc...) asparagine glycan is attached at Asn-358. An intramembrane region (pore-forming) is located at residues 381–402; sequence FAMLTVFQCITMEGWTDVLYWM. Residues 391–394 carry the Selectivity filter of repeat I motif; that stretch reads TMEG. Glu-393 is a Ca(2+) binding site. Residues 403–410 lie on the Extracellular side of the membrane; the sequence is QDAMGYEL. Residues 411-431 traverse the membrane as a helical segment; that stretch reads PWVYFVSLVIFGSFFVLNLVL. The Cytoplasmic segment spans residues 432-554; it reads GVLSGEFSKE…RKCRAAVKSN (123 aa). Positions 458–475 are AID/alpha-interaction domain; mediates interaction with the beta subunit; it reads QQLEEDLKGYLDWITQAE. The interval 479-511 is disordered; that stretch reads PENEDEGMDEEKPRNMSMPTSETESVNTENVAG. Over residues 495–508 the composition is skewed to polar residues; the sequence is SMPTSETESVNTEN. The residue at position 499 (Ser-499) is a Phosphoserine. The residue at position 506 (Thr-506) is a Phosphothreonine. The stretch at 540–786 is one II repeat; that stretch reads NRFCRRKCRA…VFLAIAVDNL (247 aa). A helical transmembrane segment spans residues 555 to 573; it reads VFYWLVIFLVFLNTLTIAS. Over 574–584 the chain is Extracellular; the sequence is EHYNQPHWLTE. A helical membrane pass occupies residues 585-605; the sequence is VQDTANKALLALFTAEMLLKM. Topologically, residues 606 to 616 are cytoplasmic; it reads YSLGLQAYFVS. A helical transmembrane segment spans residues 617–636; it reads LFNRFDCFIVCGGILETILV. The Extracellular segment spans residues 637–645; that stretch reads ETKVMSPLG. The chain crosses the membrane as a helical span at residues 646-664; that stretch reads ISVLRCVRLLRIFKITRYW. Residues 665–683 lie on the Cytoplasmic side of the membrane; it reads NSLSNLVASLLNSVRSIAS. A helical membrane pass occupies residues 684–703; the sequence is LLLLLFLFIIIFSLLGMQLF. Residues 704-723 lie on the Extracellular side of the membrane; sequence GGKFNFDEMQTRRSTFDNFP. The segment at residues 724–745 is an intramembrane region (pore-forming); that stretch reads QSLLTVFQILTGEDWNSVMYDG. A Selectivity filter of repeat II motif is present at residues 734 to 737; it reads TGED. Residue Glu-736 participates in Ca(2+) binding. At 746 to 755 the chain is on the extracellular side; it reads IMAYGGPSFP. Residues 756-775 traverse the membrane as a helical segment; that stretch reads GMLVCIYFIILFICGNYILL. Topologically, residues 776-930 are cytoplasmic; it reads NVFLAIAVDN…LQCHRIVNDT (155 aa). The interval 794–891 is disordered; it reads SAQKEEEEEK…EMPVGPRPRP (98 aa). Positions 813-836 are enriched in basic and acidic residues; that stretch reads SPEKKQEVVGKPALEEAKEEKIEL. Residues Ser-838 and Ser-845 each carry the phosphoserine modification. The tract at residues 859–906 is interaction with STAC2; sequence NESEDKSPYPNPETTGEEDEEEPEMPVGPRPRPLSELHLKEKAVPMPE. The segment covering 873-882 has biased composition (acidic residues); the sequence is TGEEDEEEPE. The III repeat unit spans residues 917-1199; it reads NRFRLQCHRI…IFVGFVIVTF (283 aa). The chain crosses the membrane as a helical span at residues 931–949; it reads IFTNLILFFILLSSISLAA. Over 950–961 the chain is Extracellular; that stretch reads EDPVQHTSFRNH. A helical membrane pass occupies residues 962–981; sequence ILFYFDIVFTTIFTIEIALK. Topologically, residues 982 to 997 are cytoplasmic; the sequence is MTAYGAFLHKGSFCRN. The helical transmembrane segment at 998–1016 threads the bilayer; it reads YFNILDLLVVSVSLISFGI. Residues 1017 to 1023 lie on the Extracellular side of the membrane; the sequence is QSSAINV. The chain crosses the membrane as a helical span at residues 1024 to 1042; sequence VKILRVLRVLRPLRAINRA. Residues 1043 to 1061 lie on the Cytoplasmic side of the membrane; it reads KGLKHVVQCVFVAIRTIGN. The chain crosses the membrane as a helical span at residues 1062-1081; sequence IVIVTTLLQFMFACIGVQLF. Residues 1082 to 1131 lie on the Extracellular side of the membrane; that stretch reads KGKLYTCSDSSKQTEAECKGNYITYKDGEVDHPIIQPRSWENSKFDFDNV. Cys-1088 and Cys-1099 are disulfide-bonded. The segment at 1119–1208 is dihydropyridine binding; sequence RSWENSKFDF…FQEQGEQEYK (90 aa). Positions 1132–1152 form an intramembrane region, pore-forming; the sequence is LAAMMALFTVSTFEGWPELLY. The short motif at 1143 to 1146 is the Selectivity filter of repeat III element; the sequence is TFEG. Position 1145 (Glu-1145) interacts with Ca(2+). Residues 1153-1169 lie on the Extracellular side of the membrane; the sequence is RSIDSHTEDKGPIYNYR. Residues 1170–1191 form a helical membrane-spanning segment; sequence VEISIFFIIYIIIIAFFMMNIF. Over 1192 to 1249 the chain is Cytoplasmic; sequence VGFVIVTFQEQGEQEYKNCELDKNQRQCVEYALKARPLRRYIPKNQHQYKVWYVVNST. One copy of the IV repeat lies at 1236 to 1509; that stretch reads NQHQYKVWYV…LFVAVIMDNF (274 aa). The helical transmembrane segment at 1250–1271 threads the bilayer; it reads YFEYLMFVLILLNTICLAMQHY. The Extracellular portion of the chain corresponds to 1272-1279; it reads GQSCLFKI. A helical membrane pass occupies residues 1280–1301; that stretch reads AMNILNMLFTGLFTVEMILKLI. Residues 1302–1311 lie on the Cytoplasmic side of the membrane; sequence AFKPKGYFSD. Residues 1312–1331 traverse the membrane as a helical segment; sequence PWNVFDFLIVIGSIIDVILS. Residues 1332–1354 lie on the Extracellular side of the membrane; sequence ETNPAEHTQCSPSMNAEENSRIS. The helical transmembrane segment at 1355–1373 threads the bilayer; it reads ITFFRLFRVMRLVKLLSRG. At 1374–1391 the chain is on the cytoplasmic side; it reads EGIRTLLWTFIKSFQALP. The chain crosses the membrane as a helical span at residues 1392–1412; sequence YVALLIVMLFFIYAVIGMQVF. Over 1413-1434 the chain is Extracellular; the sequence is GKIALNDTTEINRNNNFQTFPQ. N-linked (GlcNAc...) asparagine glycosylation is present at Asn-1418. The pore-forming intramembrane region spans 1435–1453; that stretch reads AVLLLFRCATGEAWQDIML. A Selectivity filter of repeat IV motif is present at residues 1444 to 1447; it reads TGEA. Residues 1454–1481 are Extracellular-facing; the sequence is ACMPGKKCAPESEPHNSTEGETPCGSSF. The dihydropyridine binding stretch occupies residues 1460–1528; that stretch reads KCAPESEPHN…LGPHHLDEFK (69 aa). An intrachain disulfide couples Cys-1461 to Cys-1477. Asn-1469 carries N-linked (GlcNAc...) asparagine glycosylation. The phenylalkylamine binding stretch occupies residues 1474 to 1516; sequence ETPCGSSFAVFYFISFYMLCAFLIINLFVAVIMDNFDYLTRDW. A helical membrane pass occupies residues 1482-1506; that stretch reads AVFYFISFYMLCAFLIINLFVAVIM. At 1507–2171 the chain is on the cytoplasmic side; the sequence is DNFDYLTRDW…ADRRAGVSSL (665 aa). Residues 1641 to 1668 are important for interaction with STAC1, STAC2 and STAC3; the sequence is DEVTVGKFYATFLIQEYFRKFKKRKEQG. The tract at residues 1647-1667 is calmodulin-binding IQ region; the sequence is KFYATFLIQEYFRKFKKRKEQ. The tract at residues 1681–1700 is important for localization in at the junctional membrane; it reads LQAGLRTLHDIGPEIRRAIS. Phosphoserine occurs at positions 1700 and 1721. The tract at residues 1760 to 1797 is disordered; the sequence is ISKAGNNQGDTESPSHEKLVDSTFTPSSYSSTGSNANI. Polar residues predominate over residues 1781–1793; that stretch reads STFTPSSYSSTGS. Position 1928 is a phosphoserine; by PKA (Ser-1928). 3 disordered regions span residues 1971–2014, 2026–2060, and 2114–2155; these read RSHS…EKLN, SGENSPCRGDSSAARRARPVSLTVPSQAGAQGRQF, and SGGA…PGCG. A compositionally biased stretch (basic and acidic residues) spans 2130 to 2140; sequence NRRDPGRDRAG.

It belongs to the calcium channel alpha-1 subunit (TC 1.A.1.11) family. CACNA1C subfamily. Component of a calcium channel complex consisting of a pore-forming alpha subunit (CACNA1C) and ancillary beta, gamma and delta subunits. The channel complex contains alpha, beta, gamma and delta subunits in a 1:1:1:1 ratio, i.e. it contains only one of each type of subunit. CACNA1C channel activity is modulated by ancillary subunits, such as CACNB1, CACNB2, CACNB3, CACNA2D1 and CACNA2D4. Interacts with CACNB1. Interacts with CACNB2. Identified in a complex with CACNA2D4 and CACNB3. Interacts with CACNB3. Interacts with CACNA2D1. Interacts with the gamma subunits CACNG4, CACNG6, CACNG7 and CACNG8. Interacts with CACNA2D4. Interacts with CALM1. Interacts (via the N-terminus and the C-terminal C and IQ motifs) with CABP1; this inhibits Ca(2+)-dependent channel inactivation. The binding via the C motif is calcium independent whereas the binding via IQ requires the presence of calcium and is mutually exclusive with calmodulin binding. The binding to the cytoplasmic N-terminal domain is calcium independent but is essential for the channel modulation. Interacts (via C-terminal CDB motif) with CABP5; in a calcium-dependent manner. Interacts with CIB1; the interaction increases upon cardiomyocytes hypertrophy. Interacts with STAC1, STAC2 and STAC3; this inhibits channel inactivation, probably by hindering CALM1 binding. Post-translationally, phosphorylation by PKA at Ser-1928 activates the channel. Elevated levels of blood glucose lead to increased phosphorylation by PKA. As to expression, expression in cardiac muscle. In lung, expressed in airway and vascular smooth muscle cells.

The protein resides in the cell membrane. Its subcellular location is the sarcolemma. It localises to the perikaryon. The protein localises to the postsynaptic density membrane. It is found in the cell projection. The protein resides in the dendrite. Its subcellular location is the T-tubule. It carries out the reaction Ca(2+)(in) = Ca(2+)(out). Its activity is regulated as follows. Inhibited by dihydropyridines (DHP), such as isradipine. Inhibited by nifedipine. Channel activity is regulated by Ca(2+) and calmodulin. Binding of STAC1, STAC2 or STAC3 to a region that overlaps with the calmodulin binding site inhibits channel inactivation by Ca(2+) and calmodulin. Binding of calmodulin or CABP1 at the same regulatory sites results in opposite effects on the channel function. Shear stress and pressure increases calcium channel activity. In terms of biological role, pore-forming, alpha-1C subunit of the voltage-gated calcium channel that gives rise to L-type calcium currents. Mediates influx of calcium ions into the cytoplasm, and thereby triggers calcium release from the sarcoplasm. Plays an important role in excitation-contraction coupling in the heart. Required for normal heart development and normal regulation of heart rhythm. Required for normal contraction of smooth muscle cells in blood vessels and in the intestine. Essential for normal blood pressure regulation via its role in the contraction of arterial smooth muscle cells. Long-lasting (L-type) calcium channels belong to the 'high-voltage activated' (HVA) group. The protein is Voltage-dependent L-type calcium channel subunit alpha-1C (CACNA1C) of Oryctolagus cuniculus (Rabbit).